A 518-amino-acid chain; its full sequence is Squalene monooxygenase 1,2 (518 aa).

The next 2 helical transmembrane spans lie at 3 to 23 (MAFV…WTIF) and 48 to 68 (GPDV…YALA). FAD-binding positions include 58–59 (VG), 78–79 (ER), arginine 86, phenylalanine 91, arginine 158, valine 174, aspartate 337, and methionine 350. The chain crosses the membrane as a helical span at residues 448-468 (LFYHLFVISLSSIGQLLSPFP).

This sequence belongs to the squalene monooxygenase family. The cofactor is FAD.

The protein localises to the membrane. It carries out the reaction squalene + reduced [NADPH--hemoprotein reductase] + O2 = (S)-2,3-epoxysqualene + oxidized [NADPH--hemoprotein reductase] + H2O + H(+). Its pathway is terpene metabolism; lanosterol biosynthesis; lanosterol from farnesyl diphosphate: step 2/3. Catalyzes the stereospecific oxidation of squalene to (S)-2,3-epoxysqualene, and is considered to be a rate-limiting enzyme in steroid biosynthesis. The protein is Squalene monooxygenase 1,2 (SQP1,2) of Brassica napus (Rape).